Consider the following 257-residue polypeptide: Thiazole synthase (257 aa).

The Schiff-base intermediate with DXP role is filled by lysine 96. 1-deoxy-D-xylulose 5-phosphate contacts are provided by residues glycine 157, 184 to 185 (AG), and 206 to 207 (NT).

The protein belongs to the ThiG family. In terms of assembly, homotetramer. Forms heterodimers with either ThiH or ThiS.

The protein resides in the cytoplasm. It catalyses the reaction [ThiS sulfur-carrier protein]-C-terminal-Gly-aminoethanethioate + 2-iminoacetate + 1-deoxy-D-xylulose 5-phosphate = [ThiS sulfur-carrier protein]-C-terminal Gly-Gly + 2-[(2R,5Z)-2-carboxy-4-methylthiazol-5(2H)-ylidene]ethyl phosphate + 2 H2O + H(+). Its pathway is cofactor biosynthesis; thiamine diphosphate biosynthesis. In terms of biological role, catalyzes the rearrangement of 1-deoxy-D-xylulose 5-phosphate (DXP) to produce the thiazole phosphate moiety of thiamine. Sulfur is provided by the thiocarboxylate moiety of the carrier protein ThiS. In vitro, sulfur can be provided by H(2)S. The polypeptide is Thiazole synthase (Rhizobium meliloti (strain 1021) (Ensifer meliloti)).